A 698-amino-acid polypeptide reads, in one-letter code: MARKTPIERYRNIGICAHVDAGKTTTTERILFYTGLSHKIGEVHDGAATMDWMVQEQERGITITSAATTTFWRGMEAQFQEHRINIIDTPGHVDFTIEVERSLRVLDGAVVVFCGTSGVEPQSETVWRQADKYGVPRMVFVNKMDRAGADFLRVVGQIKHRLGANPVPIQLNIGAEEEFKGVIDLIKMKAINWNEADQGMSFTYEEIPADMLELAQEWRNHLVEAAAEASEELMEKYLEDGELSEVEIKQALRQRTINNEIVLAACGSAFKNKGVQAVLDAVIEFLPSPTDVPAIKGIDDRENSVERHADDNEPFSSLAFKIATDPFVGSLTFIRVYSGVVNSGDAVYNSVKQKKERFGRIVQMHANKRDEIKEIRAGDIAAAIGLKDVTTGDTLCDPNHVVILERMEFPEPVIQIAVEPRSKADQEKMGIALGKLAAEDPSFRVETDAETGQTLISGMGELHLDIIVDRMKREFGVDCNVGKPQVAYRETIRGKSEVEGKFVRQSGGRGQYGHVWLKIEPAEPGQGFVFVDAIAGGVIPKEFINPVAKGIEEQMNNGVLAGYPVLDVKATLFDGSFHDVDSSEMAFKIAGSMAFKKGALEAQPVLLEPLMKVEITTPEDWMGDVVGDLNRRRGIIEGMDEGPAGLKIIHAKVPLSEMFGYATDLRSATQGRASYSMEFAEYADVPKNIADAIIAEHG.

The region spanning 8-290 (ERYRNIGICA…AVIEFLPSPT (283 aa)) is the tr-type G domain. Residues 17 to 24 (AHVDAGKT), 88 to 92 (DTPGH), and 142 to 145 (NKMD) each bind GTP.

This sequence belongs to the TRAFAC class translation factor GTPase superfamily. Classic translation factor GTPase family. EF-G/EF-2 subfamily.

It is found in the cytoplasm. Catalyzes the GTP-dependent ribosomal translocation step during translation elongation. During this step, the ribosome changes from the pre-translocational (PRE) to the post-translocational (POST) state as the newly formed A-site-bound peptidyl-tRNA and P-site-bound deacylated tRNA move to the P and E sites, respectively. Catalyzes the coordinated movement of the two tRNA molecules, the mRNA and conformational changes in the ribosome. This is Elongation factor G 1 from Vibrio cholerae serotype O1 (strain ATCC 39315 / El Tor Inaba N16961).